The primary structure comprises 571 residues: Penicillin-binding protein activator LpoA (571 aa).

An N-terminal signal peptide occupies residues 1–26 (MMTILLQHTHLKNRLMPFLLALFLAG). A lipid anchor (N-palmitoyl cysteine) is attached at C27. Residue C27 is the site of S-diacylglycerol cysteine attachment.

This sequence belongs to the LpoA family. As to quaternary structure, interacts with PBP1a.

It is found in the cell outer membrane. Functionally, regulator of peptidoglycan synthesis that is essential for the function of penicillin-binding protein 1A (PBP1a). This is Penicillin-binding protein activator LpoA from Pasteurella multocida (strain Pm70).